A 410-amino-acid chain; its full sequence is Lysosome-associated membrane glycoprotein 2 (410 aa).

A signal peptide spans 1 to 28 (MMCFRLSPVSGSGLVLSCLLLGAVQSYA). Positions 29–192 (FELNLPDSKA…SKEEFVCEED (164 aa)) are first lumenal domain. Over 29 to 375 (FELNLPDSKA…QDCSADEDNF (347 aa)) the chain is Lumenal. The cysteines at positions 40 and 79 are disulfide-linked. 17 N-linked (GlcNAc...) asparagine glycosylation sites follow: N48, N58, N71, N75, N99, N119, N123, N179, N222, N229, N242, N260, N275, N300, N307, N317, and N356. The cysteines at positions 153 and 189 are disulfide-linked. The hinge stretch occupies residues 193-228 (KSVTTVRPIIHTTVPPPTTTPTPLPPKVGNYSVSNG). The second lumenal domain stretch occupies residues 229–375 (NATCLLATMG…QDCSADEDNF (147 aa)). A disulfide bond links C232 and C265. A disulfide bridge links C331 with C368. A helical membrane pass occupies residues 376–399 (LVPIAVGAALAGVLALVLLAYFIG). The Cytoplasmic portion of the chain corresponds to 400 to 410 (LKRHHTGYEQF). Residues 401–404 (KRHH) are important for binding and subsequent lysosomal degradation of target proteins.

Belongs to the LAMP family. As to quaternary structure, monomer. Forms large homooligomers. Interacts (via its cytoplasmic region) with HSPA8; HSPA8 mediates recruitment of proteins with a KFERQ motif to the surface of the lysosome for chaperone-mediated autophagy. Interacts with HSP90 in the lysosome lumen; this enhances LAMP2 stability. Interacts with MLLT11. Interacts with ABCB9. Interacts with FURIN. Interacts with CT55; this interaction may be important for LAMP2 protein stability. Interacts with TMEM175; inhibiting the proton channel activity of TMEM175. Forms a ternary complex with RAB7A and RUFY4 (via RUN domain); the interaction with RAB7A is mediated by RUFY4 (via RUN and coiled coil domains). In terms of processing, extensively N-glycosylated. Contains a minor proportion of O-linked glycans.

The protein resides in the lysosome membrane. It is found in the endosome membrane. Its subcellular location is the cell membrane. The protein localises to the cytoplasmic vesicle. It localises to the autophagosome membrane. Functionally, lysosomal membrane glycoprotein which plays an important role in lysosome biogenesis, lysosomal pH regulation and autophagy. Acts as an important regulator of lysosomal lumen pH regulation by acting as a direct inhibitor of the proton channel TMEM175, facilitating lysosomal acidification for optimal hydrolase activity. Plays an important role in chaperone-mediated autophagy, a process that mediates lysosomal degradation of proteins in response to various stresses and as part of the normal turnover of proteins with a long biological half-live. Functions by binding target proteins, such as GAPDH, NLRP3 and MLLT11, and targeting them for lysosomal degradation. In the chaperone-mediated autophagy, acts downstream of chaperones, such as HSPA8/HSC70, which recognize and bind substrate proteins and mediate their recruitment to lysosomes, where target proteins bind LAMP2. Plays a role in lysosomal protein degradation in response to starvation. Required for the fusion of autophagosomes with lysosomes during autophagy. Cells that lack LAMP2 express normal levels of VAMP8, but fail to accumulate STX17 on autophagosomes, which is the most likely explanation for the lack of fusion between autophagosomes and lysosomes. Required for normal degradation of the contents of autophagosomes. Required for efficient MHC class II-mediated presentation of exogenous antigens via its function in lysosomal protein degradation; antigenic peptides generated by proteases in the endosomal/lysosomal compartment are captured by nascent MHC II subunits. Is not required for efficient MHC class II-mediated presentation of endogenous antigens. This chain is Lysosome-associated membrane glycoprotein 2 (LAMP2), found in Cricetulus griseus (Chinese hamster).